A 432-amino-acid polypeptide reads, in one-letter code: Enolase (432 aa).

Q164 lines the (2R)-2-phosphoglycerate pocket. E206 (proton donor) is an active-site residue. Residues D243, E289, and D316 each contribute to the Mg(2+) site. 4 residues coordinate (2R)-2-phosphoglycerate: K341, R370, S371, and K392. K341 serves as the catalytic Proton acceptor.

This sequence belongs to the enolase family. It depends on Mg(2+) as a cofactor.

It is found in the cytoplasm. Its subcellular location is the secreted. The protein resides in the cell surface. It catalyses the reaction (2R)-2-phosphoglycerate = phosphoenolpyruvate + H2O. It functions in the pathway carbohydrate degradation; glycolysis; pyruvate from D-glyceraldehyde 3-phosphate: step 4/5. Its function is as follows. Catalyzes the reversible conversion of 2-phosphoglycerate (2-PG) into phosphoenolpyruvate (PEP). It is essential for the degradation of carbohydrates via glycolysis. The protein is Enolase of Borrelia duttonii (strain Ly).